We begin with the raw amino-acid sequence, 429 residues long: Adenosylhomocysteinase (429 aa).

Substrate-binding residues include T64, D136, and E161. 162–164 (TTT) contacts NAD(+). Positions 191 and 195 each coordinate substrate. Residues N196, 225 to 230 (GYGWCG), E248, N283, 304 to 306 (SGH), and N351 contribute to the NAD(+) site.

This sequence belongs to the adenosylhomocysteinase family. It depends on NAD(+) as a cofactor.

It localises to the cytoplasm. It catalyses the reaction S-adenosyl-L-homocysteine + H2O = L-homocysteine + adenosine. The protein operates within amino-acid biosynthesis; L-homocysteine biosynthesis; L-homocysteine from S-adenosyl-L-homocysteine: step 1/1. Functionally, may play a key role in the regulation of the intracellular concentration of adenosylhomocysteine. This Thermosynechococcus vestitus (strain NIES-2133 / IAM M-273 / BP-1) protein is Adenosylhomocysteinase.